The sequence spans 239 residues: RBPJ-interacting and tubulin-associated protein 1 (239 aa).

A Nuclear export signal motif is present at residues 12–24; that stretch reads LDLSITGHSTALP. Disordered regions lie at residues 62 to 97 and 149 to 239; these read APPS…TPRK and LVQQ…PPWK. The Nuclear localization signal signature appears at 93–109; that stretch reads GTPRKKIQYRVKSRTPS. The segment at 129-158 is interaction with RBPJ/RBPSUH; that stretch reads WVKKEDTVKIRPLLWSPSPRLVQQSSMQNA. Polar residues-rich tracts occupy residues 149-159 and 203-221; these read LVQQSSMQNAK and RQRQ…SCSG. The tract at residues 158 to 239 is interaction with tubulin; the sequence is AKQGPLRAVH…VKMQERPPWK (82 aa).

This sequence belongs to the RITA family. In terms of assembly, interacts with rbpj/rbpsuh.

Its subcellular location is the cytoplasm. It is found in the nucleus. Its function is as follows. Tubulin-binding protein that acts as a negative regulator of Notch signaling pathway. Shuttles between the cytoplasm and the nucleus and mediates the nuclear export of rbpj/rbpsuh, thereby preventing the interaction between rbpj/rbpsuh and NICD product of Notch proteins (Notch intracellular domain), leading to down-regulate Notch-mediated transcription. May play a role in neurogenesis. The chain is RBPJ-interacting and tubulin-associated protein 1 (rita1) from Xenopus laevis (African clawed frog).